A 214-amino-acid polypeptide reads, in one-letter code: MKFFIDTANVEEIKKVAKWGVLDGVTTNPTLIAREGRDLKEVIEEICSIVDGPISAEVISLESEKMVEEAKELIKIHKNIVIKVPMCEEGLKAVSELTKLGIKTNVTLIFSAQQALLAAKAGATYVSPFLGRIDDIGSFGIQLVEDIVTIFTNFGIESEIICASIRTPIHVLECARVGGDIATVPYKVFAQMLKHPLTDRGIEQFLEDYKSMNK.

Lys-83 acts as the Schiff-base intermediate with substrate in catalysis.

It belongs to the transaldolase family. Type 3B subfamily.

The protein localises to the cytoplasm. It carries out the reaction D-sedoheptulose 7-phosphate + D-glyceraldehyde 3-phosphate = D-erythrose 4-phosphate + beta-D-fructose 6-phosphate. Its pathway is carbohydrate degradation; pentose phosphate pathway; D-glyceraldehyde 3-phosphate and beta-D-fructose 6-phosphate from D-ribose 5-phosphate and D-xylulose 5-phosphate (non-oxidative stage): step 2/3. Transaldolase is important for the balance of metabolites in the pentose-phosphate pathway. The protein is Probable transaldolase of Clostridium tetani (strain Massachusetts / E88).